The sequence spans 168 residues: UPF0303 protein YE1367 (168 aa).

This sequence belongs to the UPF0303 family.

This chain is UPF0303 protein YE1367, found in Yersinia enterocolitica serotype O:8 / biotype 1B (strain NCTC 13174 / 8081).